The primary structure comprises 83 residues: Probable calcium-binding protein CML29 (83 aa).

EF-hand domains follow at residues 5–40 (TEKAEHDRIFKKFDANGDGKISAAELEEALKTLGSV) and 43–75 (DDVKRMMAEIDTDGDGNISYQEFTDFAGANRGL). Aspartate 18, asparagine 20, aspartate 22, lysine 24, glutamate 29, aspartate 53, aspartate 55, aspartate 57, asparagine 59, and glutamate 64 together coordinate Ca(2+).

Potential calcium sensor. This chain is Probable calcium-binding protein CML29 (CML29), found in Arabidopsis thaliana (Mouse-ear cress).